The chain runs to 305 residues: Oxygen-dependent coproporphyrinogen-III oxidase (305 aa).

Position 93 (Ser93) interacts with substrate. Residues His97 and His107 each coordinate a divalent metal cation. His107 (proton donor) is an active-site residue. Residue 109–111 participates in substrate binding; it reads NVR. A divalent metal cation-binding residues include His146 and His176. The tract at residues 241–276 is important for dimerization; sequence YVEFNLVFDRGTLFGLQSGGRTESILMSLPPQVRWG. 259 to 261 contacts substrate; sequence GGR.

Belongs to the aerobic coproporphyrinogen-III oxidase family. Homodimer. The cofactor is a divalent metal cation.

The protein resides in the cytoplasm. It catalyses the reaction coproporphyrinogen III + O2 + 2 H(+) = protoporphyrinogen IX + 2 CO2 + 2 H2O. It participates in porphyrin-containing compound metabolism; protoporphyrin-IX biosynthesis; protoporphyrinogen-IX from coproporphyrinogen-III (O2 route): step 1/1. Functionally, involved in the heme biosynthesis. Catalyzes the aerobic oxidative decarboxylation of propionate groups of rings A and B of coproporphyrinogen-III to yield the vinyl groups in protoporphyrinogen-IX. The sequence is that of Oxygen-dependent coproporphyrinogen-III oxidase from Pseudomonas paraeruginosa (strain DSM 24068 / PA7) (Pseudomonas aeruginosa (strain PA7)).